The chain runs to 278 residues: ATP-dependent dethiobiotin synthetase BioD 1 (278 aa).

Residue 51–56 (NVGKTI) participates in ATP binding. Threonine 55 lines the Mg(2+) pocket. Residue lysine 76 is part of the active site. Position 102 (aspartate 102) interacts with ATP. Positions 102 and 163 each coordinate Mg(2+). Residues 223–224 (NR) and 252–254 (PYI) each bind ATP.

It belongs to the dethiobiotin synthetase family. In terms of assembly, homodimer. It depends on Mg(2+) as a cofactor.

Its subcellular location is the cytoplasm. The enzyme catalyses (7R,8S)-7,8-diammoniononanoate + CO2 + ATP = (4R,5S)-dethiobiotin + ADP + phosphate + 3 H(+). Its pathway is cofactor biosynthesis; biotin biosynthesis; biotin from 7,8-diaminononanoate: step 1/2. Functionally, catalyzes a mechanistically unusual reaction, the ATP-dependent insertion of CO2 between the N7 and N8 nitrogen atoms of 7,8-diaminopelargonic acid (DAPA, also called 7,8-diammoniononanoate) to form a ureido ring. The chain is ATP-dependent dethiobiotin synthetase BioD 1 from Haemophilus ducreyi (strain 35000HP / ATCC 700724).